The chain runs to 118 residues: MARIAGINIPDKKHAVIALTSIYGIGRTTALDICAKTGVSAAVKISELSEKQIEELREQVAKYTVEGDLRREVTLNIKRLMDIGTYRGLRHRRGLPVRGQRTKTNARTRKGPRKPIKK.

The segment at 91-118 (HRRGLPVRGQRTKTNARTRKGPRKPIKK) is disordered.

It belongs to the universal ribosomal protein uS13 family. Part of the 30S ribosomal subunit. Forms a loose heterodimer with protein S19. Forms two bridges to the 50S subunit in the 70S ribosome.

Functionally, located at the top of the head of the 30S subunit, it contacts several helices of the 16S rRNA. In the 70S ribosome it contacts the 23S rRNA (bridge B1a) and protein L5 of the 50S subunit (bridge B1b), connecting the 2 subunits; these bridges are implicated in subunit movement. Contacts the tRNAs in the A and P-sites. This is Small ribosomal subunit protein uS13 from Hamiltonella defensa subsp. Acyrthosiphon pisum (strain 5AT).